The chain runs to 118 residues: Na(+)/H(+) antiporter subunit G1 (118 aa).

A run of 3 helical transmembrane segments spans residues 9–29 (VSIIFVVLGALISAFAATGLI), 47–67 (LGAMFLLFGAFLYFIGTEGYV), and 69–89 (MQLIIGIIFVFITGPLSSHLI).

The protein belongs to the CPA3 antiporters (TC 2.A.63) subunit G family. May form a heterooligomeric complex that consists of seven subunits: mnhA1, mnhB1, mnhC1, mnhD1, mnhE1, mnhF1 and mnhG1.

It localises to the cell membrane. In terms of biological role, mnh complex is a Na(+)/H(+) antiporter involved in Na(+) excretion. The polypeptide is Na(+)/H(+) antiporter subunit G1 (mnhG1) (Staphylococcus epidermidis (strain ATCC 35984 / DSM 28319 / BCRC 17069 / CCUG 31568 / BM 3577 / RP62A)).